The primary structure comprises 80 residues: Cell division activator CedA (80 aa).

Belongs to the CedA family.

Functionally, activates the cell division inhibited by chromosomal DNA over-replication. The polypeptide is Cell division activator CedA (Salmonella choleraesuis (strain SC-B67)).